Reading from the N-terminus, the 169-residue chain is Putative 3-methyladenine DNA glycosylase (169 aa).

Belongs to the DNA glycosylase MPG family.

This chain is Putative 3-methyladenine DNA glycosylase, found in Wolbachia sp. subsp. Brugia malayi (strain TRS).